A 438-amino-acid polypeptide reads, in one-letter code: MKYFILSLGCTKNQADSEVIMGILESKGYVRSLNPEESDLLIVNTCGFIAAAIEESIEEILNLVHLKKPGQKILVAGCLVQREGKELAKHLPEVDLFFTPREINNLDKLLADLGENNKLVLSEPGFLNLEKKPRAKSNEVYRYIKIADGCDNRCTYCTIPAIRGKYTSRPLDDILEEIKDTLKQGIKEIILVAQDTTAYGIDLYGEFKLVELLRKIGSIKGNFWVRLMYLYPDKITPELINEIKENPKVIKYVDVPLQHIHPEILKKMGRKGSSEEIISTLERLRKEIPDITIRTTFIVGFPGETEEQFNYLLDFVKKFKFNRLGAFPYYREKGTPAAKMKGQIPKKVKEQRYEKLMEVQQEISLNLNKALVGKKIPVIVEKKIRGENLYLGRTYMDAPEIDGIIEIKAEKRLKKGQIINVLITDYDIYDLKGEFIND.

Positions 1 to 115 constitute an MTTase N-terminal domain; it reads MKYFILSLGC…LDKLLADLGE (115 aa). [4Fe-4S] cluster is bound by residues cysteine 10, cysteine 46, cysteine 78, cysteine 150, cysteine 154, and cysteine 157. The Radical SAM core domain occupies 136–366; that stretch reads KSNEVYRYIK…MEVQQEISLN (231 aa). Residues 369-437 enclose the TRAM domain; sequence KALVGKKIPV…IYDLKGEFIN (69 aa).

The protein belongs to the methylthiotransferase family. RimO subfamily. [4Fe-4S] cluster serves as cofactor.

It is found in the cytoplasm. The catalysed reaction is L-aspartate(89)-[ribosomal protein uS12]-hydrogen + (sulfur carrier)-SH + AH2 + 2 S-adenosyl-L-methionine = 3-methylsulfanyl-L-aspartate(89)-[ribosomal protein uS12]-hydrogen + (sulfur carrier)-H + 5'-deoxyadenosine + L-methionine + A + S-adenosyl-L-homocysteine + 2 H(+). Its function is as follows. Catalyzes the methylthiolation of an aspartic acid residue of ribosomal protein uS12. This chain is Ribosomal protein uS12 methylthiotransferase RimO, found in Carboxydothermus hydrogenoformans (strain ATCC BAA-161 / DSM 6008 / Z-2901).